A 477-amino-acid polypeptide reads, in one-letter code: C4-dicarboxylate transport protein 1 (477 aa).

The next 8 membrane-spanning stretches (helical) occupy residues 21–39 (PYVQ…GHFY), 59–76 (MIIA…IAGM), 89–111 (AMVY…GNVI), 162–179 (ILQV…LAMV), 200–221 (LVGI…FTIG), 231–253 (LAML…LGAV), 342–364 (VLLL…AGFV), and 368–387 (ATLS…ILGV). The disordered stretch occupies residues 435-477 (SAGQPLITPAPSNSAASLPVESPGWSQTPDDRAAGSKQTLAGR).

The protein belongs to the dicarboxylate/amino acid:cation symporter (DAACS) (TC 2.A.23) family.

Its subcellular location is the cell inner membrane. Functionally, responsible for the transport of dicarboxylates such as succinate, fumarate, and malate from the periplasm across the membrane. This transport system plays an important role in the energy supply of rhizobium-legume symbionts. The protein is C4-dicarboxylate transport protein 1 (dctA1) of Mesorhizobium japonicum (strain LMG 29417 / CECT 9101 / MAFF 303099) (Mesorhizobium loti (strain MAFF 303099)).